The following is a 243-amino-acid chain: Methylthioribulose-1-phosphate dehydratase (243 aa).

The tract at residues 1–22 (MCPADQTVATNNNDHLVQSEDP) is disordered. Over residues 7–16 (TVATNNNDHL) the composition is skewed to polar residues. Residue C103 participates in substrate binding. Zn(2+) is bound by residues H120 and H122. E149 serves as the catalytic Proton donor/acceptor. Residue H205 participates in Zn(2+) binding.

This sequence belongs to the aldolase class II family. MtnB subfamily. Zn(2+) is required as a cofactor.

Its subcellular location is the cytoplasm. The enzyme catalyses 5-(methylsulfanyl)-D-ribulose 1-phosphate = 5-methylsulfanyl-2,3-dioxopentyl phosphate + H2O. Its pathway is amino-acid biosynthesis; L-methionine biosynthesis via salvage pathway; L-methionine from S-methyl-5-thio-alpha-D-ribose 1-phosphate: step 2/6. In terms of biological role, catalyzes the dehydration of methylthioribulose-1-phosphate (MTRu-1-P) into 2,3-diketo-5-methylthiopentyl-1-phosphate (DK-MTP-1-P). In Penicillium rubens (strain ATCC 28089 / DSM 1075 / NRRL 1951 / Wisconsin 54-1255) (Penicillium chrysogenum), this protein is Methylthioribulose-1-phosphate dehydratase.